The sequence spans 169 residues: Peptide deformylase (169 aa).

Fe cation is bound by residues Cys91 and His133. Residue Glu134 is part of the active site. Residue His137 coordinates Fe cation.

This sequence belongs to the polypeptide deformylase family. The cofactor is Fe(2+).

The catalysed reaction is N-terminal N-formyl-L-methionyl-[peptide] + H2O = N-terminal L-methionyl-[peptide] + formate. In terms of biological role, removes the formyl group from the N-terminal Met of newly synthesized proteins. Requires at least a dipeptide for an efficient rate of reaction. N-terminal L-methionine is a prerequisite for activity but the enzyme has broad specificity at other positions. The sequence is that of Peptide deformylase from Hydrogenovibrio crunogenus (strain DSM 25203 / XCL-2) (Thiomicrospira crunogena).